Consider the following 1076-residue polypeptide: MINRLKTYSNLLNIQSKSFKNFLKIGIINELKKIQKIIHSNFEINFHINALKYKKPKLSSESCLIKNETYNIDIKIPMEIKYEGKIIFKKKYISFCKIPFMTEKGTFICNGNTRIIINQLIRSPGIYIKKKKNCLLATLIPKTGSWITIKRNKKKENFIKIDKINNSIPLFTFLNILGLSKKKITLSLNKNNYSKNFKISKKKKIEIPTINLTQLSKENNIKTIRNNLYNRFLNSDNYNLGDTGRFKINKKIYKTEFFTNKKILMPEDFLGIFNYMIKIKNINIKSNKIDDLKNKIVLSVGELMQNKFNNIIKDIYTKIIEKINKFEQKKKQEEKYNKEKKEEKIKINKTYFINSKNLTDNIKKFITTNPLSQLLNDLNPLSELTHKRKISTLGIGGIEKNKASTKIREIHNSHYGRICPIETSEGKNAGLVLSLAKDIRINKHGFIESPFYKVIKGNIKKNKGIFFISSENEKNIKIAPCDILKNFKLNKNYGVKNKNEFYYDSYKSINFISTSTDQFNSIGTGIIPFLEHNDANRVLMGATMQKQALILKNKEPSLIETGREILINRDSKSTIIAKESGTVIYSSSKKIIIQKKSKKSKFKNINLFKKYFKKKLKKNKKIKKHKHTIYLLNIDEKNNSNIYQTRTSIVKKNDWIKKGQIIAEGIGSLNGNLCLGKNILVGYLSWEGYNFEDAIIISERLRNEDILTSIHVKKCKSFLINHKEKKEEITKNIPDIKLKNVKNLNNNGIIKIGSKINGKEILIGIIKKRLINYEVELIYEILSEYERKNISVLSPKNLVGIVTNTKIHKIKNCYQIEIYITEKKKIQIGDKLSGRHGNKGVISKIIPIVDMPYLPDGTPIDIILNPLGIPSRMNVGQIYECLLNLSAINLKERYKIQPFDEYQYKNNSEILIYKKLNQSRKKTKKEWLFNPNNPGKTILFNGKNGKPFKQTISFGYSYILKLMHIAEEKIHAKTISNYSSIIKQPVKGKSKNGGQRFGEMEVWAIEGFGAAFLLQELLTIKSDDLHNKSQILKNLMNGLSMSKPNVPESFKLLILELQSLGLNINIFTKKKTLFTK.

This sequence belongs to the RNA polymerase beta chain family. In terms of assembly, in plastids the minimal PEP RNA polymerase catalytic core is composed of four subunits: alpha, beta, beta', and beta''. When a (nuclear-encoded) sigma factor is associated with the core the holoenzyme is formed, which can initiate transcription.

The protein resides in the plastid. It catalyses the reaction RNA(n) + a ribonucleoside 5'-triphosphate = RNA(n+1) + diphosphate. DNA-dependent RNA polymerase catalyzes the transcription of DNA into RNA using the four ribonucleoside triphosphates as substrates. This is DNA-directed RNA polymerase subunit beta from Euglena longa (Euglenophycean alga).